Consider the following 284-residue polypeptide: 2-dehydro-3-deoxyphosphooctonate aldolase (284 aa).

Belongs to the KdsA family.

The protein localises to the cytoplasm. It carries out the reaction D-arabinose 5-phosphate + phosphoenolpyruvate + H2O = 3-deoxy-alpha-D-manno-2-octulosonate-8-phosphate + phosphate. It participates in carbohydrate biosynthesis; 3-deoxy-D-manno-octulosonate biosynthesis; 3-deoxy-D-manno-octulosonate from D-ribulose 5-phosphate: step 2/3. The protein operates within bacterial outer membrane biogenesis; lipopolysaccharide biosynthesis. This Synechococcus sp. (strain ATCC 27144 / PCC 6301 / SAUG 1402/1) (Anacystis nidulans) protein is 2-dehydro-3-deoxyphosphooctonate aldolase.